The chain runs to 316 residues: uncharacterized protein (316 aa).

Disordered stretches follow at residues 82–105 (AMAA…SGGN) and 238–257 (ASVS…DTQE). 2 stretches are compositionally biased toward low complexity: residues 84 to 96 (AAAS…SSGT) and 239 to 255 (SVSV…STDT).

The protein belongs to the MG307/MG309/MG338 family.

This is an uncharacterized protein from Mycoplasma pneumoniae (strain ATCC 29342 / M129 / Subtype 1) (Mycoplasmoides pneumoniae).